The sequence spans 209 residues: MKLLKLLSVAALSAASMMANAAGVDALSGLLKNVETFTANFTQTMRSQSGQVLQEVTGTLKAKRPGLFFWKTRAPLEQTIVTDGQQVWIYDPDLEQVTIQHLSQQLSNTPALLLSGEVGKIDEQYQVEQQPESQPGQVDFLLRPKGVDSLFDTLQLSFVNDQLVSMKLKDSLGQQTSLFFTAVSVNQTISEKAFHFEIPDGVDVIREAP.

The first 21 residues, 1–21 (MKLLKLLSVAALSAASMMANA), serve as a signal peptide directing secretion.

The protein belongs to the LolA family. Monomer.

The protein resides in the periplasm. Functionally, participates in the translocation of lipoproteins from the inner membrane to the outer membrane. Only forms a complex with a lipoprotein if the residue after the N-terminal Cys is not an aspartate (The Asp acts as a targeting signal to indicate that the lipoprotein should stay in the inner membrane). This chain is Outer-membrane lipoprotein carrier protein, found in Hahella chejuensis (strain KCTC 2396).